Consider the following 471-residue polypeptide: MTDLPDSTRWQLWIVAFGFFMQSLDTTIVNTAIPSMAQSLGESPLHMHMVIVSYVLTVAVMLPASGWLADKVGVRNIFFTAIVLFTLGSLFCALSGTLNELLLARALQGVGGAMMVPVGRLTVMKIVPREQYMAAMTFVTLPGQVGPLLGPALGGLLVEYASWHWIFLINIPVGIIGAIATLMLMPNYTMQTRRFDLSGFLLLAVGMAVLTLALDGSKGTGLSPLAIAGLVAVGVVALVLYLLHARNNNRALFSLKLFRTRTFSLGLAGSFAGRIGSGMLPFMTPVFLQIGLGFSPFHAGLMMIPMVLGSMGMKRIVVQVVNRFGYRRVLVATTLGLSLVTLLFMTTALLGWYYVLPFVLFLQGMVNSTRFSSMNTLTLKDLPDNLASSGNSLLSMIMQLSMSIGVTIAGLLLGLFGSQHVSVDSGTTQTVFMYTWLSMAFIIALPAFIFARVPNDTHQNVAISRRKRSAQ.

The Periplasmic portion of the chain corresponds to 1–12 (MTDLPDSTRWQL). A helical transmembrane segment spans residues 13-33 (WIVAFGFFMQSLDTTIVNTAI). Residues 34–48 (PSMAQSLGESPLHMH) are Cytoplasmic-facing. The helical transmembrane segment at 49–69 (MVIVSYVLTVAVMLPASGWLA) threads the bilayer. At 70 to 76 (DKVGVRN) the chain is on the periplasmic side. A helical membrane pass occupies residues 77–97 (IFFTAIVLFTLGSLFCALSGT). Residues 98 to 101 (LNEL) lie on the Cytoplasmic side of the membrane. The helical transmembrane segment at 102–124 (LLARALQGVGGAMMVPVGRLTVM) threads the bilayer. The Periplasmic portion of the chain corresponds to 125-137 (KIVPREQYMAAMT). The helical transmembrane segment at 138 to 158 (FVTLPGQVGPLLGPALGGLLV) threads the bilayer. Residues 159–164 (EYASWH) are Cytoplasmic-facing. A helical transmembrane segment spans residues 165-185 (WIFLINIPVGIIGAIATLMLM). Residues 186–196 (PNYTMQTRRFD) lie on the Periplasmic side of the membrane. The chain crosses the membrane as a helical span at residues 197-217 (LSGFLLLAVGMAVLTLALDGS). At 218–224 (KGTGLSP) the chain is on the cytoplasmic side. Residues 225-245 (LAIAGLVAVGVVALVLYLLHA) form a helical membrane-spanning segment. The Periplasmic portion of the chain corresponds to 246 to 262 (RNNNRALFSLKLFRTRT). The chain crosses the membrane as a helical span at residues 263-283 (FSLGLAGSFAGRIGSGMLPFM). Residues 284-285 (TP) lie on the Cytoplasmic side of the membrane. Residues 286–306 (VFLQIGLGFSPFHAGLMMIPM) form a helical membrane-spanning segment. At 307–341 (VLGSMGMKRIVVQVVNRFGYRRVLVATTLGLSLVT) the chain is on the periplasmic side. Residues 342–362 (LLFMTTALLGWYYVLPFVLFL) traverse the membrane as a helical segment. Topologically, residues 363 to 395 (QGMVNSTRFSSMNTLTLKDLPDNLASSGNSLLS) are cytoplasmic. Residues 396 to 416 (MIMQLSMSIGVTIAGLLLGLF) form a helical membrane-spanning segment. The Periplasmic segment spans residues 417–430 (GSQHVSVDSGTTQT). A helical transmembrane segment spans residues 431–451 (VFMYTWLSMAFIIALPAFIFA). Residues 452–471 (RVPNDTHQNVAISRRKRSAQ) lie on the Cytoplasmic side of the membrane.

Belongs to the major facilitator superfamily. TCR/Tet family.

The protein resides in the cell inner membrane. In Shigella flexneri serotype 5b (strain 8401), this protein is Putative multidrug resistance protein MdtD.